Here is a 452-residue protein sequence, read N- to C-terminus: MVTLKEALKFSAEEIKNLRAELEAKIIKEKELGAYVEQLANLEIAKLGEGVPIAIKDNIQVKGWSVTSASKILQGYVAPYNATVIEKLLSKNLAPFGRTNMDEFAMGSTTESSFYGKTLNPLNHAHVPGGSSGGSAAAVAAGLAVAALGSDTGGSIRQPAAFCGCVGLKPTYGRVSRYGLGAYSSSLDQIGPIAQNVEDAAILYDAIAGHDPKDSTSADVPFVSISDKIDGNKKLKICVIKNYVENASEQTKAALNLAIEKLKSHGHSVTYTNFEDSKYDVAAYYIIATAEASANLSRYDGVRYGRRAEARNLKELYVNSRSEGFGEEVKRRILLGTFVLSSGYYDAYYIKAQKARAHIKAQYEKILEENDLIFMPVAPSTAYKFGAHSDPLQAYLSDIYTISVNLAGLPAISVPVGKDDQNLNVSAQLIAKAWDEQTLINGAKSLENLIKG.

Active-site charge relay system residues include Lys-56 and Ser-131. Catalysis depends on Ser-155, which acts as the Acyl-ester intermediate.

Belongs to the amidase family. GatA subfamily. As to quaternary structure, heterotrimer of A, B and C subunits.

The catalysed reaction is L-glutamyl-tRNA(Gln) + L-glutamine + ATP + H2O = L-glutaminyl-tRNA(Gln) + L-glutamate + ADP + phosphate + H(+). Its function is as follows. Allows the formation of correctly charged Gln-tRNA(Gln) through the transamidation of misacylated Glu-tRNA(Gln) in organisms which lack glutaminyl-tRNA synthetase. The reaction takes place in the presence of glutamine and ATP through an activated gamma-phospho-Glu-tRNA(Gln). The sequence is that of Glutamyl-tRNA(Gln) amidotransferase subunit A from Campylobacter concisus (strain 13826).